Here is a 109-residue protein sequence, read N- to C-terminus: Probable WRKY transcription factor 43 (109 aa).

Residues 24–89 (SDADILDDGY…YEGIHNHPCE (66 aa)) constitute a DNA-binding region (WRKY).

It belongs to the WRKY group II-c family.

The protein resides in the nucleus. Its function is as follows. Transcription factor. Interacts specifically with the W box (5'-(T)TGAC[CT]-3'), a frequently occurring elicitor-responsive cis-acting element. This chain is Probable WRKY transcription factor 43 (WRKY43), found in Arabidopsis thaliana (Mouse-ear cress).